Here is a 368-residue protein sequence, read N- to C-terminus: H-2 class I histocompatibility antigen, K-D alpha chain (368 aa).

A signal peptide spans 1 to 21; that stretch reads MAPCTLLLLLAAALAPTQTRA. Residues 22-111 are alpha-1; it reads GPHSLRYFVT…AQRYYNQSKG (90 aa). The Extracellular portion of the chain corresponds to 22–305; the sequence is GPHSLRYFVT…KLPPSTVSNT (284 aa). Asparagine 107 carries N-linked (GlcNAc...) asparagine glycosylation. Residues 112–203 are alpha-2; that stretch reads GSHTFQRMFG…ELGNETLLRT (92 aa). A disulfide bridge connects residues cysteine 122 and cysteine 185. 2 N-linked (GlcNAc...) asparagine glycosylation sites follow: asparagine 197 and asparagine 277. Positions 204-295 are alpha-3; it reads DSPKAHVTYH…GLPEPLTLRW (92 aa). Positions 206-294 constitute an Ig-like C1-type domain; it reads PKAHVTYHPR…KGLPEPLTLR (89 aa). A disulfide bridge links cysteine 224 with cysteine 280. Residues 296-305 are connecting peptide; that stretch reads KLPPSTVSNT. A helical membrane pass occupies residues 306-328; the sequence is VIIAVLVVLGAAIVTGAVVAFVM. At 329 to 368 the chain is on the cytoplasmic side; sequence KMRRNTGGKGVNYALAPGSQTSDLSLPDGKVMVHDPHSLA. 2 positions are modified to phosphoserine: serine 350 and serine 353.

It belongs to the MHC class I family. In terms of assembly, heterodimer of an alpha chain and a beta chain (beta-2-microglobulin).

It localises to the membrane. Functionally, involved in the presentation of foreign antigens to the immune system. This chain is H-2 class I histocompatibility antigen, K-D alpha chain (H2-K1), found in Mus musculus (Mouse).